A 331-amino-acid chain; its full sequence is Aspartate carbamoyltransferase catalytic subunit (331 aa).

Carbamoyl phosphate is bound by residues Arg55 and Thr56. An L-aspartate-binding site is contributed by Lys84. Carbamoyl phosphate is bound by residues Arg105, His133, and Gln136. 2 residues coordinate L-aspartate: Arg166 and Arg229. 2 residues coordinate carbamoyl phosphate: Leu268 and Pro269.

The protein belongs to the aspartate/ornithine carbamoyltransferase superfamily. ATCase family. In terms of assembly, heterododecamer (2C3:3R2) of six catalytic PyrB chains organized as two trimers (C3), and six regulatory PyrI chains organized as three dimers (R2).

It carries out the reaction carbamoyl phosphate + L-aspartate = N-carbamoyl-L-aspartate + phosphate + H(+). It participates in pyrimidine metabolism; UMP biosynthesis via de novo pathway; (S)-dihydroorotate from bicarbonate: step 2/3. Functionally, catalyzes the condensation of carbamoyl phosphate and aspartate to form carbamoyl aspartate and inorganic phosphate, the committed step in the de novo pyrimidine nucleotide biosynthesis pathway. In Alkaliphilus oremlandii (strain OhILAs) (Clostridium oremlandii (strain OhILAs)), this protein is Aspartate carbamoyltransferase catalytic subunit.